The primary structure comprises 43 residues: Protein PsbN (43 aa).

Residues Gly4–Tyr24 traverse the membrane as a helical segment.

This sequence belongs to the PsbN family.

It localises to the plastid. The protein localises to the chloroplast thylakoid membrane. May play a role in photosystem I and II biogenesis. This chain is Protein PsbN, found in Chaetosphaeridium globosum (Charophycean green alga).